Reading from the N-terminus, the 1414-residue chain is DNA-directed RNA polymerase subunit beta' (1414 aa).

Residues cysteine 70, cysteine 72, cysteine 85, and cysteine 88 each contribute to the Zn(2+) site. 3 residues coordinate Mg(2+): aspartate 460, aspartate 462, and aspartate 464. Zn(2+) contacts are provided by cysteine 814, cysteine 888, cysteine 895, and cysteine 898. Over residues 1392 to 1403 (EQALSEALKSSA) the composition is skewed to low complexity. The segment at 1392 to 1414 (EQALSEALKSSAPQEAKAAQKDE) is disordered.

It belongs to the RNA polymerase beta' chain family. In terms of assembly, the RNAP catalytic core consists of 2 alpha, 1 beta, 1 beta' and 1 omega subunit. When a sigma factor is associated with the core the holoenzyme is formed, which can initiate transcription. Mg(2+) is required as a cofactor. It depends on Zn(2+) as a cofactor.

It catalyses the reaction RNA(n) + a ribonucleoside 5'-triphosphate = RNA(n+1) + diphosphate. Its function is as follows. DNA-dependent RNA polymerase catalyzes the transcription of DNA into RNA using the four ribonucleoside triphosphates as substrates. The chain is DNA-directed RNA polymerase subunit beta' from Coxiella burnetii (strain RSA 331 / Henzerling II).